Reading from the N-terminus, the 263-residue chain is 4-hydroxy-tetrahydrodipicolinate reductase (263 aa).

Residues 8–13, Asp34, 97–99, and 123–126 contribute to the NAD(+) site; these read GACGKM, GTT, and APNF. His153 serves as the catalytic Proton donor/acceptor. Residue His154 participates in (S)-2,3,4,5-tetrahydrodipicolinate binding. Residue Lys157 is the Proton donor of the active site. 163–164 is a (S)-2,3,4,5-tetrahydrodipicolinate binding site; the sequence is GT.

The protein belongs to the DapB family.

The protein localises to the cytoplasm. It carries out the reaction (S)-2,3,4,5-tetrahydrodipicolinate + NAD(+) + H2O = (2S,4S)-4-hydroxy-2,3,4,5-tetrahydrodipicolinate + NADH + H(+). The enzyme catalyses (S)-2,3,4,5-tetrahydrodipicolinate + NADP(+) + H2O = (2S,4S)-4-hydroxy-2,3,4,5-tetrahydrodipicolinate + NADPH + H(+). Its pathway is amino-acid biosynthesis; L-lysine biosynthesis via DAP pathway; (S)-tetrahydrodipicolinate from L-aspartate: step 4/4. Its function is as follows. Catalyzes the conversion of 4-hydroxy-tetrahydrodipicolinate (HTPA) to tetrahydrodipicolinate. The chain is 4-hydroxy-tetrahydrodipicolinate reductase from Carboxydothermus hydrogenoformans (strain ATCC BAA-161 / DSM 6008 / Z-2901).